Here is a 312-residue protein sequence, read N- to C-terminus: Small ribosomal subunit protein uS2m (312 aa).

The protein belongs to the universal ribosomal protein uS2 family.

The protein resides in the mitochondrion. The sequence is that of Small ribosomal subunit protein uS2m (RPS2) from Acanthamoeba castellanii (Amoeba).